We begin with the raw amino-acid sequence, 290 residues long: 33 kDa chaperonin (290 aa).

Disulfide bonds link Cys235-Cys237 and Cys268-Cys271.

This sequence belongs to the HSP33 family. Under oxidizing conditions two disulfide bonds are formed involving the reactive cysteines. Under reducing conditions zinc is bound to the reactive cysteines and the protein is inactive.

It is found in the cytoplasm. Functionally, redox regulated molecular chaperone. Protects both thermally unfolding and oxidatively damaged proteins from irreversible aggregation. Plays an important role in the bacterial defense system toward oxidative stress. This chain is 33 kDa chaperonin, found in Streptococcus sanguinis (strain SK36).